Reading from the N-terminus, the 123-residue chain is Small ribosomal subunit protein uS13 (123 aa).

The disordered stretch occupies residues 97 to 123 (PVRGQRTHTNAKTRKGRSRLPVAAKKK).

Belongs to the universal ribosomal protein uS13 family. In terms of assembly, part of the 30S ribosomal subunit. Forms a loose heterodimer with protein S19. Forms two bridges to the 50S subunit in the 70S ribosome.

In terms of biological role, located at the top of the head of the 30S subunit, it contacts several helices of the 16S rRNA. In the 70S ribosome it contacts the 23S rRNA (bridge B1a) and protein L5 of the 50S subunit (bridge B1b), connecting the 2 subunits; these bridges are implicated in subunit movement. Contacts the tRNAs in the A and P-sites. The chain is Small ribosomal subunit protein uS13 from Ehrlichia ruminantium (strain Gardel).